The chain runs to 174 residues: Crossover junction endodeoxyribonuclease RuvC (174 aa).

Residues Asp8, Glu67, and Asp139 contribute to the active site. Mg(2+)-binding residues include Asp8, Glu67, and Asp139.

Belongs to the RuvC family. In terms of assembly, homodimer which binds Holliday junction (HJ) DNA. The HJ becomes 2-fold symmetrical on binding to RuvC with unstacked arms; it has a different conformation from HJ DNA in complex with RuvA. In the full resolvosome a probable DNA-RuvA(4)-RuvB(12)-RuvC(2) complex forms which resolves the HJ. It depends on Mg(2+) as a cofactor.

It localises to the cytoplasm. The enzyme catalyses Endonucleolytic cleavage at a junction such as a reciprocal single-stranded crossover between two homologous DNA duplexes (Holliday junction).. Its function is as follows. The RuvA-RuvB-RuvC complex processes Holliday junction (HJ) DNA during genetic recombination and DNA repair. Endonuclease that resolves HJ intermediates. Cleaves cruciform DNA by making single-stranded nicks across the HJ at symmetrical positions within the homologous arms, yielding a 5'-phosphate and a 3'-hydroxyl group; requires a central core of homology in the junction. The consensus cleavage sequence is 5'-(A/T)TT(C/G)-3'. Cleavage occurs on the 3'-side of the TT dinucleotide at the point of strand exchange. HJ branch migration catalyzed by RuvA-RuvB allows RuvC to scan DNA until it finds its consensus sequence, where it cleaves and resolves the cruciform DNA. This Pseudomonas putida (strain GB-1) protein is Crossover junction endodeoxyribonuclease RuvC.